The primary structure comprises 307 residues: 1D-myo-inositol 2-acetamido-2-deoxy-alpha-D-glucopyranoside deacetylase 1 (307 aa).

Residues His-21, Asp-24, and His-157 each contribute to the Zn(2+) site.

It belongs to the MshB deacetylase family. It depends on Zn(2+) as a cofactor.

The enzyme catalyses 1D-myo-inositol 2-acetamido-2-deoxy-alpha-D-glucopyranoside + H2O = 1D-myo-inositol 2-amino-2-deoxy-alpha-D-glucopyranoside + acetate. In terms of biological role, catalyzes the deacetylation of 1D-myo-inositol 2-acetamido-2-deoxy-alpha-D-glucopyranoside (GlcNAc-Ins) in the mycothiol biosynthesis pathway. This Frankia casuarinae (strain DSM 45818 / CECT 9043 / HFP020203 / CcI3) protein is 1D-myo-inositol 2-acetamido-2-deoxy-alpha-D-glucopyranoside deacetylase 1.